The chain runs to 270 residues: UBX domain-containing protein 8 (270 aa).

Methionine 1 is a topological domain (cytoplasmic). A helical transmembrane segment spans residues 2 to 22; the sequence is ASRGVVGIFFLSAVPLVCLEL. The Lumenal segment spans residues 23-33; sequence RRGIPDIGIKD. Residues 34–54 traverse the membrane as a helical segment; it reads FLLLCGRILLLLALLTLIISV. Over 55 to 270 the chain is Cytoplasmic; it reads TTSWLNSFKS…LILEEKEQTN (216 aa). The tract at residues 130–171 is disordered; the sequence is SGHKLGGDEGTSQTSFETSNREAAKSQNLPKPLTEFPSPAEQ. Residue serine 167 is modified to Phosphoserine. The 77-residue stretch at 187–263 folds into the UBX domain; that stretch reads TAEEVVTVAL…GITVDTVLIL (77 aa).

In terms of assembly, interacts with SYVN1 and VCP. As to expression, expressed abundantly in ovary and testis, and weakly in all other tissues tested.

The protein resides in the endoplasmic reticulum membrane. In terms of biological role, involved in endoplasmic reticulum-associated degradation (ERAD) for misfolded lumenal proteins, possibly by tethering VCP to the endoplasmic reticulum membrane. May play a role in reproduction. This Homo sapiens (Human) protein is UBX domain-containing protein 8 (UBXN8).